Reading from the N-terminus, the 117-residue chain is Multidrug resistance protein EbrB (117 aa).

The next 4 helical transmembrane spans lie at 3 to 23 (GLLYLALAIVSEVFGSTMLKL), 31 to 51 (WPIGGVIAGFLSAFTFLSFSL), 59 to 79 (AYATWSGVGTALTAIVGFLLF), and 81 to 101 (ETISLKGVFGLTLVIAGVVVL).

The protein belongs to the drug/metabolite transporter (DMT) superfamily. Small multidrug resistance (SMR) (TC 2.A.7.1) family. EbrA/EbrB subfamily. The efflux pump is composed of EbrA and EbrB.

It is found in the cell membrane. Part of a multidrug efflux pump. Confers resistance to cationic lipophilic dyes such as ethidium bromide, acriflavine, pyronine Y and safranin O. The efflux is probably coupled to an influx of protons. The protein is Multidrug resistance protein EbrB (ebrB) of Bacillus atrophaeus.